A 62-amino-acid polypeptide reads, in one-letter code: Large ribosomal subunit protein bL33 (62 aa).

The protein belongs to the bacterial ribosomal protein bL33 family.

This is Large ribosomal subunit protein bL33 from Azobacteroides pseudotrichonymphae genomovar. CFP2.